The primary structure comprises 237 residues: Ras-related protein RABA3 (237 aa).

G35–T42 contributes to the GTP binding site. The short motif at S57–F65 is the Effector region element. Residues D83 to Q87, N141 to D144, and S172 to A173 contribute to the GTP site. 2 S-geranylgeranyl cysteine lipidation sites follow: C235 and C237. Position 237 is a cysteine methyl ester (C237).

The protein belongs to the small GTPase superfamily. Rab family. As to expression, expressed in root tips.

It is found in the endosome membrane. The protein localises to the golgi apparatus. It localises to the trans-Golgi network membrane. Its function is as follows. Intracellular vesicle trafficking and protein transport. The sequence is that of Ras-related protein RABA3 (RABA3) from Arabidopsis thaliana (Mouse-ear cress).